Consider the following 477-residue polypeptide: RTX-III toxin determinant D (477 aa).

Topologically, residues M1–L59 are cytoplasmic. A helical membrane pass occupies residues I60–I77. Residues S78–R477 lie on the Periplasmic side of the membrane.

This sequence belongs to the membrane fusion protein (MFP) (TC 8.A.1) family.

The protein localises to the cell inner membrane. Involved in the transport of the toxin RTX-III. In Actinobacillus pleuropneumoniae (Haemophilus pleuropneumoniae), this protein is RTX-III toxin determinant D (apxIIID).